Reading from the N-terminus, the 459-residue chain is Probable PTS system sucrose-specific EIIBC component (459 aa).

Residues 1 to 86 (MHKEIAKELL…VHVWETAPSE (86 aa)) enclose the PTS EIIB type-1 domain. The Phosphocysteine intermediate; for EIIB activity role is filled by C25. The PTS EIIC type-1 domain maps to 106–459 (KTLSDIFVPI…LFLGFKEETE (354 aa)). A run of 11 helical transmembrane segments spans residues 111 to 131 (IFVPIIPAITASGLLMGLIGM), 147 to 167 (MLDLVSSTAFILLPILVGFSA), 177 to 197 (LGAVIAGLLTHPDLLDPSMLG), 209 to 229 (LHIPMMGYQGSMIPILLSVFV), 245 to 265 (LDVVIIPFITVMVTGCLALIV), 288 to 308 (AGIAAGALFGGIYSTIVLSGL), 329 to 349 (FLVPIWSMANVAQGGAGLAVF), 360 to 380 (IALPASLTAFLGIVEPIVFGV), 388 to 408 (FIGAAIGGAIGGAYVVAVQVV), 412 to 432 (YGLTGIPMISIVLPFGAANFV), and 434 to 454 (YMIGFLIAAVSAFIATLFLGF).

It localises to the cell membrane. Functionally, the phosphoenolpyruvate-dependent sugar phosphotransferase system (sugar PTS), a major carbohydrate active -transport system, catalyzes the phosphorylation of incoming sugar substrates concomitantly with their translocation across the cell membrane. This system may be involved in sucrose transport. The EIIB domain is mainly phosphorylated by the EIIA domains of GamP and PtsA/YpqE. Its function is as follows. Negatively regulates SacY activity by catalyzing its phosphorylation on 'His-99'. The sequence is that of Probable PTS system sucrose-specific EIIBC component (sacX) from Bacillus subtilis (strain 168).